A 41-amino-acid chain; its full sequence is Large ribosomal subunit protein bL36 (41 aa).

The interval 1–21 (MKIRNSLKSLRGRHRDNQLVR) is disordered.

It belongs to the bacterial ribosomal protein bL36 family.

This Methylobacterium sp. (strain 4-46) protein is Large ribosomal subunit protein bL36.